The primary structure comprises 534 residues: MDTTAEENALRREIVKTFQIHAFELKKEAVKLCVKLFLDHDKETRKKWTNKMIELLKKQTLQSSLISEELIRDTFRQCKSKGTQDAGKLLNVFDAFSLQPYDFDADLRKMVLRKEKTSLAADSSSFSHAARQRFFIVKQRAMRCASLKNFKFTTCEILGSSTKHLQSVVVLGMLTQQKADCYHIEDLSGSVEVEFKEDTKFHHALFHEHSIAIFEGTFENSVLTVNEVAMVPVESAEVTRKELSSNENWFGGDDKIAFRCSDRLRSALAKQEDTSLVFLSDVFLDDKKVMKAVFKLLQGYKDQPPVAIVFCGNFCSRPRQTDTIDLLDRGFRWLANQLTPLRKDYEKTQFIFVPGPDDPFVDTVLPRPHLPSLLFKHISPIISCTFASNPCRIQFASQEIVVFRSDLIKKTCRHSINSITVESIPSRYARSVLSQAHLCPLPQHITPVLPDFSHSLSLHPLPDLLITADRFETFTEKVVGADTIVSNPGSFSRSNYTFHVYYPCQNRVEASQIPVSELDDHSNIKNVIIFFFLF.

The protein belongs to the DNA polymerase epsilon subunit B family. As to quaternary structure, consists of four subunits.

The protein localises to the nucleus. Accessory component of the DNA polymerase epsilon complex. Participates in DNA repair and in chromosomal DNA replication. The sequence is that of Probable DNA polymerase epsilon subunit 2 (pole-2) from Caenorhabditis elegans.